We begin with the raw amino-acid sequence, 400 residues long: Na(+)/H(+) antiporter NhaA (400 aa).

The next 12 membrane-spanning stretches (helical) occupy residues 26-46 (AGGI…NSPL), 71-91 (LIHW…GMEV), 107-127 (IFPA…YWFI), 137-157 (GWAI…ALLS), 166-186 (IFLL…IALF), 189-209 (HGLS…LILL), 212-232 (FKVS…ASVL), 233-253 (KSGV…PLKG), 273-293 (FVIL…GIDV), 299-319 (PLLL…IFGF), 340-360 (IFAV…LASL), and 373-393 (LSRL…YLFL).

Belongs to the NhaA Na(+)/H(+) (TC 2.A.33) antiporter family.

It localises to the cell inner membrane. It catalyses the reaction Na(+)(in) + 2 H(+)(out) = Na(+)(out) + 2 H(+)(in). Its function is as follows. Na(+)/H(+) antiporter that extrudes sodium in exchange for external protons. In Haemophilus influenzae (strain PittEE), this protein is Na(+)/H(+) antiporter NhaA.